We begin with the raw amino-acid sequence, 417 residues long: V-set and immunoglobulin domain-containing protein 8 (417 aa).

Residues 1 to 21 form the signal peptide; it reads MGVRGALHLLLVCLSPALLSA. 2 consecutive Ig-like V-type domains span residues 22–140 and 145–256; these read VRIN…VIVT and PAVP…VKVS. Over 22–262 the chain is Extracellular; that stretch reads VRINGDGQEV…VKVSDSQRVG (241 aa). 2 cysteine pairs are disulfide-bonded: C44/C125 and C166/C238. Residues 263 to 283 traverse the membrane as a helical segment; it reads MIVGAVLGSLLMLACLALGIW. Residues 284 to 417 are Cytoplasmic-facing; that stretch reads GLICCCCGGG…QRSCKDGLLV (134 aa).

Its subcellular location is the membrane. This is V-set and immunoglobulin domain-containing protein 8 (Vsig8) from Mus musculus (Mouse).